Consider the following 608-residue polypeptide: MVTKLFLRPHSLSFTLLSGIHLFPKTSLSKPITLCLLSTTATTPILTLTQTLDPNLSYGPSLHKGTKPLNHQNHQLIAATPGEEECVFDKEAFTRVFNLTAIRVPSKDCFALENRLRGHLLNWPRIRNVARVPGDEVEDGLVKLLGEKRNSSDGSESEGDFDSLNRRIYGKAEGDGEILSPVLYRDTLAKTFDSQGFANFRNLAKLSRPKKKKRRKEEERSEGKKRTGKNEFAMVEVVEDGEEGEDLRGLLGEEFKRKRWRGSTRLLLLDERYADKGVEELPEAIKAVLKEDTGQSMTSTFELVKCKLTLFYNYWQMNEILEALLPEGMIVPSAFEMVGHIAHLNLRDEHLPYKKLIAKVVLDKNKPKIQTVVNKTDAIHNDYRTMQLEVLAGNRSLVTTVIENGMRFQVDLATVYWNSRLATERQRLLNCFTRNDVVCDVFSGVGPIAISAAKKVKRVYANDLNPYAIEYLESNSVLNKLERKIKVFNMDGRRFINAMFTSDKAESITQVVMNLPNDAAEFLDAFRGIFRKKSRDKQLKLPMIHVYGFSKAQDPEFDFHQRIRIALSEVAVDVEMHRVRLVAPGKWMLRASFILPKSVVFAKAVLYM.

A disordered region spans residues Ser207–Lys229. The span at Lys216–Lys229 shows a compositional bias: basic and acidic residues. Residues Arg425, Asp463–Leu464, Asp491–Gly492, and Asn514 contribute to the S-adenosyl-L-methionine site.

Belongs to the class I-like SAM-binding methyltransferase superfamily. TRM5/TYW2 family. As to quaternary structure, monomer.

Its subcellular location is the mitochondrion matrix. It is found in the nucleus. The protein resides in the cytoplasm. The enzyme catalyses guanosine(37) in tRNA + S-adenosyl-L-methionine = N(1)-methylguanosine(37) in tRNA + S-adenosyl-L-homocysteine + H(+). Its function is as follows. Specifically methylates the N1 position of guanosine-37 in various cytoplasmic and mitochondrial tRNAs. Methylation is not dependent on the nature of the nucleoside 5' of the target nucleoside. This is the first step in the biosynthesis of wybutosine (yW), a modified base adjacent to the anticodon of tRNAs and required for accurate decoding. In Vitis vinifera (Grape), this protein is tRNA (guanine(37)-N(1))-methyltransferase 1.